Here is a 182-residue protein sequence, read N- to C-terminus: Ribosome-recycling factor (182 aa).

This sequence belongs to the RRF family.

It localises to the cytoplasm. Functionally, responsible for the release of ribosomes from messenger RNA at the termination of protein biosynthesis. May increase the efficiency of translation by recycling ribosomes from one round of translation to another. The sequence is that of Ribosome-recycling factor from Parasynechococcus marenigrum (strain WH8102).